The chain runs to 92 residues: Small ribosomal subunit protein uS19 (92 aa).

This sequence belongs to the universal ribosomal protein uS19 family.

Functionally, protein S19 forms a complex with S13 that binds strongly to the 16S ribosomal RNA. The polypeptide is Small ribosomal subunit protein uS19 (Pectobacterium atrosepticum (strain SCRI 1043 / ATCC BAA-672) (Erwinia carotovora subsp. atroseptica)).